A 246-amino-acid chain; its full sequence is NAD-dependent protein deacetylase (246 aa).

One can recognise a Deacetylase sirtuin-type domain in the interval 1-246 (MKKPDIQQLK…VIEEIVNSNS (246 aa)). Positions 25, 36, 37, 106, 108, 109, and 124 each coordinate NAD(+). Position 36 (phenylalanine 36) interacts with nicotinamide. Residues isoleucine 108 and aspartate 109 each coordinate nicotinamide. Histidine 124 serves as the catalytic Proton acceptor. The Zn(2+) site is built by cysteine 132, cysteine 135, cysteine 152, and cysteine 155. NAD(+) contacts are provided by serine 193, serine 194, asparagine 216, and aspartate 233.

This sequence belongs to the sirtuin family. Class U subfamily. The cofactor is Zn(2+).

It is found in the cytoplasm. The catalysed reaction is N(6)-acetyl-L-lysyl-[protein] + NAD(+) + H2O = 2''-O-acetyl-ADP-D-ribose + nicotinamide + L-lysyl-[protein]. In terms of biological role, NAD-dependent protein deacetylase which modulates the activities of several enzymes which are inactive in their acetylated form. The protein is NAD-dependent protein deacetylase of Staphylococcus epidermidis (strain ATCC 12228 / FDA PCI 1200).